The chain runs to 136 residues: 5-hydroxyisourate hydrolase (136 aa).

The signal sequence occupies residues 1 to 20 (MKRYILATVIASLVAAPAMA). Residues His31, Arg69, and Tyr133 each coordinate substrate.

Belongs to the transthyretin family. 5-hydroxyisourate hydrolase subfamily. In terms of assembly, homotetramer.

The protein localises to the periplasm. The catalysed reaction is 5-hydroxyisourate + H2O = 5-hydroxy-2-oxo-4-ureido-2,5-dihydro-1H-imidazole-5-carboxylate + H(+). In terms of biological role, catalyzes the hydrolysis of 5-hydroxyisourate (HIU) to 2-oxo-4-hydroxy-4-carboxy-5-ureidoimidazoline (OHCU). This chain is 5-hydroxyisourate hydrolase (hiuH), found in Salmonella typhimurium (strain LT2 / SGSC1412 / ATCC 700720).